A 405-amino-acid chain; its full sequence is Solute carrier family 35 member E2A (405 aa).

Positions 1 to 22 (MSAAAKSQVPEEAAPGCEEEPK) are disordered. 10 helical membrane passes run 76–96 (LIYL…NKYI), 106–126 (MLGA…IFVP), 142–162 (FIMT…LGLV), 167–187 (VAVS…VIMS), 195–215 (TGLL…LCTA), 219–241 (SFNI…QNVF), 264–284 (AAAV…PVIG), 296–316 (IVLL…TAYA), 326–346 (FSVA…IVFG), and 347–367 (NKIT…VLLY). The tract at residues 380–405 (SLVTATSRNPEDDTEPLVPQDSRQHH) is disordered.

It belongs to the TPT transporter family. SLC35E subfamily.

Its subcellular location is the membrane. Its function is as follows. Putative transporter. The sequence is that of Solute carrier family 35 member E2A (Slc35e2a) from Mus musculus (Mouse).